The primary structure comprises 4249 residues: Fibrocystin-L (4249 aa).

Residues 1–20 form the signal peptide; it reads MGHLWLSGTWFLFGLLWCAA. Residues 21 to 4222 lie on the Extracellular side of the membrane; the sequence is DSHKGSSETI…TPVQTLAVIT (4202 aa). IPT/TIG domains follow at residues 31 to 132, 146 to 255, 270 to 361, 1067 to 1153, 1155 to 1234, 1240 to 1323, 1329 to 1468, 1565 to 1648, 1658 to 1742, 1748 to 1827, 1830 to 1909, 1915 to 1996, 1998 to 2084, and 2090 to 2175; these read PKVT…GVAS, PTIR…KMTY, PEVV…ILEY, PLIL…HFIY, SQIS…SFSY, PVVT…KLNA, LEVI…SFSY, PSII…TLTK, PNID…SFSY, PYVT…NLTI, PAVA…SFTY, PFLK…AFEY, LSIQ…LFTY, and PLIT…DFLY. The 156-residue stretch at 337-492 folds into the PA14 domain; the sequence is PGGRGLKVEV…NVFTEQQTGD (156 aa). O-linked (GalNAc...) threonine glycans are attached at residues T1297 and T1359. T1838 carries O-linked (GalNAc...) threonine glycosylation. Positions 2183 to 2303 constitute a G8 1 domain; that stretch reads SSWGGSPPPE…IPVVWTRLTH (121 aa). PbH1 repeat units lie at residues 2484–2506, 2507–2529, 2565–2587, 2664–2686, and 2732–2755; these read QFKSYVKGCAIHQSYNRAITIHN, THHLLVERNIIYDIKGGAFFIED, NPNNTIRHNAAAGGTHFGFWYRM, GGALQFHNFVMVNNNEAGIETKR, and SQGLTVSSVHFMNFDRHACVALGV. Residues 3035-3173 enclose the G8 2 domain; the sequence is SFWQSSPENN…HSVYKTKLLE (139 aa). PbH1 repeat units lie at residues 3292–3314, 3354–3376, 3415–3437, 3470–3492, and 3493–3514; these read KGNARISNVEFHHSGQEGYRDST, TDGVDIDDNIIYFTVGEGIRIWG, GTNTVLQNNVVAGFGRVGYRIDG, PGCSLIQGFTIWTCWDYGIYFQT, and TESVHIYNVTLVNNGMSIFSMV. The O-linked (GalNAc...) threonine glycan is linked to T3735. The tract at residues 4183–4208 is disordered; sequence LSAQSVPGGSGSSPGSGSSSSGHSKA. Positions 4197–4208 are enriched in low complexity; that stretch reads GSGSSSSGHSKA. A helical transmembrane segment spans residues 4223–4243; the sequence is ACLVGRLLLLEVFMAAVFILN. The Cytoplasmic portion of the chain corresponds to 4244–4249; that stretch reads TTVGIN.

In terms of tissue distribution, expressed in neurons in the hippocampus and the cerebral cortex (at protein level). Transiently expressed at high levels in inner ear hair cells, predominantly in outer hair cells, during early postnatal development (at protein level).

Its subcellular location is the membrane. It is found in the cell projection. The protein resides in the stereocilium membrane. In terms of biological role, component of hair-cell stereocilia coat. Required for normal hearing. This chain is Fibrocystin-L (Pkhd1l1), found in Mus musculus (Mouse).